We begin with the raw amino-acid sequence, 99 residues long: Co-chaperonin GroES (99 aa).

It belongs to the GroES chaperonin family. Heptamer of 7 subunits arranged in a ring. Interacts with the chaperonin GroEL.

The protein resides in the cytoplasm. Together with the chaperonin GroEL, plays an essential role in assisting protein folding. The GroEL-GroES system forms a nano-cage that allows encapsulation of the non-native substrate proteins and provides a physical environment optimized to promote and accelerate protein folding. GroES binds to the apical surface of the GroEL ring, thereby capping the opening of the GroEL channel. The protein is Co-chaperonin GroES of Corynebacterium glutamicum (strain R).